The following is a 112-amino-acid chain: Hydrogenase maturation factor HypA (112 aa).

Residue His2 coordinates Ni(2+). Zn(2+) is bound by residues Cys72, Cys75, Cys88, and Cys91.

Belongs to the HypA/HybF family.

Functionally, involved in the maturation of [NiFe] hydrogenases. Required for nickel insertion into the metal center of the hydrogenase. This chain is Hydrogenase maturation factor HypA, found in Francisella philomiragia subsp. philomiragia (strain ATCC 25017 / CCUG 19701 / FSC 153 / O#319-036).